A 199-amino-acid polypeptide reads, in one-letter code: uncharacterized protein (199 aa).

4 consecutive transmembrane segments (helical) span residues 35–55 (CELAFSILILFCAFAELIFYD), 57–77 (FVIFFLMIIASFVFVLLYLEF), 94–114 (LSAAFMSMVCWLSVLIPIFFG), and 131–151 (YYGCQVIFGSLLTTFAAASFA).

It localises to the membrane. This is an uncharacterized protein from Caenorhabditis elegans.